The primary structure comprises 883 residues: Glutamate receptor 2 (883 aa).

The N-terminal stretch at 1–21 is a signal peptide; sequence MQKIMHISVLLSPVLWGLIFG. Over 22–543 the chain is Extracellular; sequence VSSNSIQIGG…GVFSFLDPLA (522 aa). C78 and C330 are joined by a disulfide. 4 N-linked (GlcNAc...) asparagine glycosylation sites follow: N256, N370, N406, and N413. Residues P499, T501, and R506 each coordinate L-glutamate. The helical transmembrane segment at 544 to 564 threads the bilayer; the sequence is YEIWMCIVFAYIGVSVVLFLV. Over 565–591 the chain is Cytoplasmic; the sequence is SRFSPYEWHTEEFEDGRETQSSESTNE. An intramembrane region (helical; Pore-forming) is located at residues 592–607; sequence FGIFNSLWFSLGAFMQ. Residues 608–610 lie within the membrane without spanning it; it reads QGC. C610 carries the S-palmitoyl cysteine lipid modification. Over 611-616 the chain is Cytoplasmic; it reads DISPRS. A helical transmembrane segment spans residues 617–637; it reads LSGRIVGGVWWFFTLIIISSY. The Extracellular segment spans residues 638-812; the sequence is TANLAAFLTV…EKTSALSLSN (175 aa). L-glutamate is bound by residues S675 and T676. Phosphoserine; by PKC is present on S683. S717 bears the Phosphoserine; by PKG mark. E726 is an L-glutamate binding site. An intrachain disulfide couples C739 to C794. Residues 813 to 833 form a helical membrane-spanning segment; that stretch reads VAGVFYILVGGLGLAMLVALI. Residues 834-883 lie on the Cytoplasmic side of the membrane; sequence EFCYKSRAEAKRMKVAKNPQNINPSSSQNSQNFATYKEGYNVYGIESVKI. C836 is lipidated: S-palmitoyl cysteine. Phosphoserine occurs at positions 860 and 863. The segment at 867–877 is required for interaction with IQSEC1; the sequence is ATYKEGYNVYG. Position 876 is a phosphotyrosine (Y876). S880 bears the Phosphoserine mark.

The protein belongs to the glutamate-gated ion channel (TC 1.A.10.1) family. GRIA2 subfamily. Homotetramer or heterotetramer of pore-forming glutamate receptor subunits. Tetramers may be formed by the dimerization of dimers. May interact with MPP4. Forms a ternary complex with GRIP1 and CSPG4. Interacts with ATAD1 in an ATP-dependent manner. ATAD1-catalyzed ATP hydrolysis disrupts binding to ATAD1 and to GRIP1 and leads to AMPAR complex disassembly. Interacts with GRIP2. Interacts with GRIP1. Interacts with NSF via its C-terminus. Interacts with CACNG2, PICK1 and GRIP2. Interacts with GRIA1 and SYNDIG1. Part of a complex containing GRIA2, NSF and NAPA and/or NAPB. Interacts with SNX27 (via PDZ domain); the interaction is required for recycling to the plasma membrane when endocytosed and prevent degradation in lysosomes. Interacts with LRFN1. Found in a complex with GRIA1, GRIA3, GRIA4, CNIH2, CNIH3, CACNG2, CACNG3, CACNG4, CACNG5, CACNG7 and CACNG8. Interacts with CACNG5. Interacts with OLFM2. Interacts with AP4B1, AP4E1 and AP4M1; probably indirect it mediates the somatodendritic localization of GRIA2 in neurons. Forms a complex with GRIP1, NSG1 and STX12; controls the intracellular fate of AMPAR and the endosomal sorting of the GRIA2 subunit toward recycling and membrane targeting. Interacts with IQSEC1; the interaction is required for ARF6 activation. Interacts (heterotetramer form) with CNIH2 and CNIH3; this interaction promotes expression at the plasma membrane and extensively modulates their gating properties by slowing deactivation and desensitization kinetics. In terms of processing, palmitoylated. Depalmitoylated upon L-glutamate stimulation. Cys-610 palmitoylation leads to Golgi retention and decreased cell surface expression. In contrast, Cys-836 palmitoylation does not affect cell surface expression but regulates stimulation-dependent endocytosis. Phosphorylation at Tyr-876 is required for interaction with IQSEC1 and ARF6 activation, which in turn triggers AMPAR internalization for persistent synaptic depression. Post-translationally, ubiquitinated by RNF167, leading to its degradation. In terms of processing, N-glycosylated. Detected in forebrain. Detected in dendrites of neuronal cells. Expressed in the pyramidal cell layers of CA1 and CA3 and in the granule cell layer of the dentate gyrus.

It localises to the cell membrane. The protein localises to the postsynaptic cell membrane. The protein resides in the postsynaptic density membrane. The enzyme catalyses Ca(2+)(in) = Ca(2+)(out). The catalysed reaction is Na(+)(in) = Na(+)(out). In terms of biological role, ionotropic glutamate receptor that functions as a ligand-gated cation channel, gated by L-glutamate and glutamatergic agonists such as alpha-amino-3-hydroxy-5-methyl-4-isoxazolepropionic acid (AMPA), quisqualic acid, and kainic acid. L-glutamate acts as an excitatory neurotransmitter at many synapses in the central nervous system and plays an important role in fast excitatory synaptic transmission. Binding of the excitatory neurotransmitter L-glutamate induces a conformation change, leading to the opening of the cation channel, and thereby converts the chemical signal to an electrical impulse upon entry of monovalent and divalent cations such as sodium and calcium. The receptor then desensitizes rapidly and enters in a transient inactive state, characterized by the presence of bound agonist. In the presence of CACNG4 or CACNG7 or CACNG8, shows resensitization which is characterized by a delayed accumulation of current flux upon continued application of L-glutamate. Through complex formation with NSG1, GRIP1 and STX12 controls the intracellular fate of AMPAR and the endosomal sorting of the GRIA2 subunit toward recycling and membrane targeting. This is Glutamate receptor 2 from Rattus norvegicus (Rat).